Consider the following 222-residue polypeptide: 4'-phosphopantetheinyl transferase Npt (222 aa).

Aspartate 105, glutamate 107, and glutamate 147 together coordinate Mg(2+).

Belongs to the P-Pant transferase superfamily. As to quaternary structure, monomer. Requires Mg(2+) as cofactor.

It catalyses the reaction apo-[ACP] + CoA = holo-[ACP] + adenosine 3',5'-bisphosphate + H(+). Catalyzes the transfer of the 4'-phosphopantetheine moiety from coenzyme A to a serine residue in the acyl-carrier domain of carboxylic acid reductase Car, thus converting apo-Car to fully active holo-Car. Is probably also responsible for the activation of other proteins with phosphopantetheine attachment sites. In Nocardia iowensis, this protein is 4'-phosphopantetheinyl transferase Npt (npt).